A 251-amino-acid chain; its full sequence is 5'-nucleotidase SurE (251 aa).

Residues Asp-8, Asp-9, Ser-39, and Asn-91 each contribute to the a divalent metal cation site.

This sequence belongs to the SurE nucleotidase family. Requires a divalent metal cation as cofactor.

It localises to the cytoplasm. It catalyses the reaction a ribonucleoside 5'-phosphate + H2O = a ribonucleoside + phosphate. Nucleotidase that shows phosphatase activity on nucleoside 5'-monophosphates. This Thioalkalivibrio sulfidiphilus (strain HL-EbGR7) protein is 5'-nucleotidase SurE.